The primary structure comprises 327 residues: tRNA uridine(34) hydroxylase (327 aa).

Positions 130-224 constitute a Rhodanese domain; it reads LDEDTVVLDT…YGKDPEVRGE (95 aa). The active-site Cysteine persulfide intermediate is Cys-184.

This sequence belongs to the TrhO family.

It carries out the reaction uridine(34) in tRNA + AH2 + O2 = 5-hydroxyuridine(34) in tRNA + A + H2O. In terms of biological role, catalyzes oxygen-dependent 5-hydroxyuridine (ho5U) modification at position 34 in tRNAs. The protein is tRNA uridine(34) hydroxylase of Streptococcus suis (strain 98HAH33).